Consider the following 188-residue polypeptide: Adenylate kinase (188 aa).

11-16 (GAGKGT) is a binding site for ATP. The interval 31 to 60 (STGDIFRANIKDQTELGREAQRYTDAGNLV) is NMP. AMP contacts are provided by residues T32, R37, 58–60 (NLV), 86–89 (GYPR), and Q93. The segment at 127-137 (GRAQEQGRTDD) is LID. Residue R128 coordinates ATP. AMP-binding residues include R134 and R145. G173 provides a ligand contact to ATP.

Belongs to the adenylate kinase family. As to quaternary structure, monomer.

Its subcellular location is the cytoplasm. It catalyses the reaction AMP + ATP = 2 ADP. The protein operates within purine metabolism; AMP biosynthesis via salvage pathway; AMP from ADP: step 1/1. Catalyzes the reversible transfer of the terminal phosphate group between ATP and AMP. Plays an important role in cellular energy homeostasis and in adenine nucleotide metabolism. This chain is Adenylate kinase, found in Kocuria rhizophila (strain ATCC 9341 / DSM 348 / NBRC 103217 / DC2201).